A 335-amino-acid polypeptide reads, in one-letter code: DNA primase small subunit PriS (335 aa).

Catalysis depends on residues aspartate 96, aspartate 98, and aspartate 243.

The protein belongs to the eukaryotic-type primase small subunit family. As to quaternary structure, heterodimer of a small subunit (PriS) and a large subunit (PriL). The cofactor is Mg(2+). Mn(2+) is required as a cofactor.

Catalytic subunit of DNA primase, an RNA polymerase that catalyzes the synthesis of short RNA molecules used as primers for DNA polymerase during DNA replication. The small subunit contains the primase catalytic core and has DNA synthesis activity on its own. Binding to the large subunit stabilizes and modulates the activity, increasing the rate of DNA synthesis while decreasing the length of the DNA fragments, and conferring RNA synthesis capability. The DNA polymerase activity may enable DNA primase to also catalyze primer extension after primer synthesis. May also play a role in DNA repair. This Archaeoglobus fulgidus (strain ATCC 49558 / DSM 4304 / JCM 9628 / NBRC 100126 / VC-16) protein is DNA primase small subunit PriS.